The sequence spans 353 residues: Chorismate synthase (353 aa).

NADP(+) contacts are provided by arginine 48 and arginine 54. Residues 125–127 (RSS), 238–239 (NA), glycine 278, 293–297 (KPTSS), and arginine 319 contribute to the FMN site.

It belongs to the chorismate synthase family. As to quaternary structure, homotetramer. FMNH2 serves as cofactor.

It catalyses the reaction 5-O-(1-carboxyvinyl)-3-phosphoshikimate = chorismate + phosphate. The protein operates within metabolic intermediate biosynthesis; chorismate biosynthesis; chorismate from D-erythrose 4-phosphate and phosphoenolpyruvate: step 7/7. Its function is as follows. Catalyzes the anti-1,4-elimination of the C-3 phosphate and the C-6 proR hydrogen from 5-enolpyruvylshikimate-3-phosphate (EPSP) to yield chorismate, which is the branch point compound that serves as the starting substrate for the three terminal pathways of aromatic amino acid biosynthesis. This reaction introduces a second double bond into the aromatic ring system. The polypeptide is Chorismate synthase (Bordetella bronchiseptica (strain ATCC BAA-588 / NCTC 13252 / RB50) (Alcaligenes bronchisepticus)).